A 319-amino-acid chain; its full sequence is 3-oxoacyl-[acyl-carrier-protein] reductase, chloroplastic (319 aa).

A chloroplast-targeting transit peptide spans 1 to 57 (MAAAVAAPRLISLKAVAKLGFREISQIRQLAPLHSAIPHFGMLRCRSRQPFSTSVVK). Position 58 is an N-acetylalanine (Ala-58). NADP(+) is bound at residue 81–105 (ITGASRGIGKAIALALGKAGCKVLV). Ser-213 provides a ligand contact to substrate. Tyr-226 functions as the Proton acceptor in the catalytic mechanism.

This sequence belongs to the short-chain dehydrogenases/reductases (SDR) family. As to quaternary structure, homotetramer.

It localises to the plastid. The protein resides in the chloroplast. The enzyme catalyses a (3R)-hydroxyacyl-[ACP] + NADP(+) = a 3-oxoacyl-[ACP] + NADPH + H(+). It functions in the pathway lipid metabolism; fatty acid biosynthesis. The sequence is that of 3-oxoacyl-[acyl-carrier-protein] reductase, chloroplastic from Arabidopsis thaliana (Mouse-ear cress).